The sequence spans 361 residues: Holliday junction branch migration complex subunit RuvB (361 aa).

The interval 1 to 21 (MHKDEDQRLLGAVPLPNDPDR) is disordered. The segment at 1-184 (MHKDEDQRLL…FGIPIRLNFY (184 aa)) is large ATPase domain (RuvB-L). ATP-binding positions include L23, R24, G65, K68, T69, T70, 131 to 133 (EDY), R174, Y184, and R221. Residue T69 coordinates Mg(2+). Residues 185–255 (TIEELEYIVQ…IADEALSRLE (71 aa)) are small ATPAse domain (RuvB-S). A head domain (RuvB-H) region spans residues 258 to 361 (HLGLDPLDRR…QTVLWDEADD (104 aa)). DNA is bound by residues R294, R313, and R318.

The protein belongs to the RuvB family. In terms of assembly, homohexamer. Forms an RuvA(8)-RuvB(12)-Holliday junction (HJ) complex. HJ DNA is sandwiched between 2 RuvA tetramers; dsDNA enters through RuvA and exits via RuvB. An RuvB hexamer assembles on each DNA strand where it exits the tetramer. Each RuvB hexamer is contacted by two RuvA subunits (via domain III) on 2 adjacent RuvB subunits; this complex drives branch migration. In the full resolvosome a probable DNA-RuvA(4)-RuvB(12)-RuvC(2) complex forms which resolves the HJ.

It is found in the cytoplasm. The catalysed reaction is ATP + H2O = ADP + phosphate + H(+). In terms of biological role, the RuvA-RuvB-RuvC complex processes Holliday junction (HJ) DNA during genetic recombination and DNA repair, while the RuvA-RuvB complex plays an important role in the rescue of blocked DNA replication forks via replication fork reversal (RFR). RuvA specifically binds to HJ cruciform DNA, conferring on it an open structure. The RuvB hexamer acts as an ATP-dependent pump, pulling dsDNA into and through the RuvAB complex. RuvB forms 2 homohexamers on either side of HJ DNA bound by 1 or 2 RuvA tetramers; 4 subunits per hexamer contact DNA at a time. Coordinated motions by a converter formed by DNA-disengaged RuvB subunits stimulates ATP hydrolysis and nucleotide exchange. Immobilization of the converter enables RuvB to convert the ATP-contained energy into a lever motion, pulling 2 nucleotides of DNA out of the RuvA tetramer per ATP hydrolyzed, thus driving DNA branch migration. The RuvB motors rotate together with the DNA substrate, which together with the progressing nucleotide cycle form the mechanistic basis for DNA recombination by continuous HJ branch migration. Branch migration allows RuvC to scan DNA until it finds its consensus sequence, where it cleaves and resolves cruciform DNA. The chain is Holliday junction branch migration complex subunit RuvB from Bartonella henselae (strain ATCC 49882 / DSM 28221 / CCUG 30454 / Houston 1) (Rochalimaea henselae).